Reading from the N-terminus, the 107-residue chain is Apolipoprotein E (107 aa).

5 consecutive repeat copies span residues 11 to 32, 33 to 54, 55 to 76, 77 to 98, and 99 to 107. The segment at 11–107 is 5 X 22 AA approximate tandem repeats; sequence ALMDETMKEL…LRDVDDLQKR (97 aa). Met-74 is subject to Methionine sulfoxide. Position 78 is a phosphoserine (Ser-78). The tract at residues 89-99 is LDL and other lipoprotein receptors binding; sequence HLRKLRKRLLR. Heparin is bound at residue 93-96; it reads LRKR.

It belongs to the apolipoprotein A1/A4/E family. Homotetramer. May interact with ABCA1; functionally associated with ABCA1 in the biogenesis of HDLs. May interact with APP/A4 amyloid-beta peptide; the interaction is extremely stable in vitro but its physiological significance is unclear. May interact with MAPT. May interact with MAP2. In the cerebrospinal fluid, interacts with secreted SORL1. Interacts with PMEL; this allows the loading of PMEL luminal fragment on ILVs to induce fibril nucleation. In terms of processing, APOE exists as multiple glycosylated and sialylated glycoforms within cells and in plasma. The extent of glycosylation and sialylation are tissue and context specific. Post-translationally, glycated in plasma VLDL. Phosphorylated by FAM20C in the extracellular medium.

The protein resides in the secreted. The protein localises to the extracellular space. It is found in the extracellular matrix. Its subcellular location is the extracellular vesicle. It localises to the endosome. The protein resides in the multivesicular body. In terms of biological role, APOE is an apolipoprotein, a protein associating with lipid particles, that mainly functions in lipoprotein-mediated lipid transport between organs via the plasma and interstitial fluids. APOE is a core component of plasma lipoproteins and is involved in their production, conversion and clearance. Apolipoproteins are amphipathic molecules that interact both with lipids of the lipoprotein particle core and the aqueous environment of the plasma. As such, APOE associates with chylomicrons, chylomicron remnants, very low density lipoproteins (VLDL) and intermediate density lipoproteins (IDL) but shows a preferential binding to high-density lipoproteins (HDL). It also binds a wide range of cellular receptors including the LDL receptor/LDLR, the LDL receptor-related proteins LRP1, LRP2 and LRP8 and the very low-density lipoprotein receptor/VLDLR that mediate the cellular uptake of the APOE-containing lipoprotein particles. Finally, APOE also has a heparin-binding activity and binds heparan-sulfate proteoglycans on the surface of cells, a property that supports the capture and the receptor-mediated uptake of APOE-containing lipoproteins by cells. A main function of APOE is to mediate lipoprotein clearance through the uptake of chylomicrons, VLDLs, and HDLs by hepatocytes. APOE is also involved in the biosynthesis by the liver of VLDLs as well as their uptake by peripheral tissues ensuring the delivery of triglycerides and energy storage in muscle, heart and adipose tissues. By participating in the lipoprotein-mediated distribution of lipids among tissues, APOE plays a critical role in plasma and tissues lipid homeostasis. APOE is also involved in two steps of reverse cholesterol transport, the HDLs-mediated transport of cholesterol from peripheral tissues to the liver, and thereby plays an important role in cholesterol homeostasis. First, it is functionally associated with ABCA1 in the biogenesis of HDLs in tissues. Second, it is enriched in circulating HDLs and mediates their uptake by hepatocytes. APOE also plays an important role in lipid transport in the central nervous system, regulating neuron survival and sprouting. This chain is Apolipoprotein E (APOE), found in Saimiri sciureus (Common squirrel monkey).